The following is a 555-amino-acid chain: Formate--tetrahydrofolate ligase (555 aa).

65 to 72 contributes to the ATP binding site; that stretch reads TPAGEGKS.

It belongs to the formate--tetrahydrofolate ligase family.

It catalyses the reaction (6S)-5,6,7,8-tetrahydrofolate + formate + ATP = (6R)-10-formyltetrahydrofolate + ADP + phosphate. It functions in the pathway one-carbon metabolism; tetrahydrofolate interconversion. This Staphylococcus aureus (strain COL) protein is Formate--tetrahydrofolate ligase.